The following is a 442-amino-acid chain: uncharacterized protein (442 aa).

The segment at 211 to 269 is disordered; sequence LDYSTDKPEDSESEDIELEDSESEDSESEDIDQHGGQGPDDDEFNANFDDPQFDEFDFG. Positions 221-240 are enriched in acidic residues; sequence SESEDIELEDSESEDSESED.

The protein localises to the virion. This is an uncharacterized protein from Acanthamoeba polyphaga (Amoeba).